Reading from the N-terminus, the 98-residue chain is Class II hydrophobin 2 (98 aa).

The first 21 residues, 1–21 (MFFSRISTIVSMTALFASALA), serve as a signal peptide directing secretion. Cystine bridges form between C34–C80, C41–C71, C42–C54, and C81–C92.

The protein belongs to the cerato-ulmin hydrophobin family.

The protein localises to the secreted. The protein resides in the cell wall. Functionally, aerial growth, conidiation, and dispersal of filamentous fungi in the environment rely upon a capability of their secreting small amphipathic proteins called hydrophobins (HPBs) with low sequence identity. Class I can self-assemble into an outermost layer of rodlet bundles on aerial cell surfaces, conferring cellular hydrophobicity that supports fungal growth, development and dispersal; whereas Class II form highly ordered films at water-air interfaces through intermolecular interactions but contribute nothing to the rodlet structure. In Botryotinia fuckeliana, hydrophobins are not involved in conferring surface hydrophobicity to conidia and aerial hyphae and their function in sclerotia and fruiting bodies remains to be investigated. The sequence is that of Class II hydrophobin 2 from Botryotinia fuckeliana (strain B05.10) (Noble rot fungus).